Here is a 293-residue protein sequence, read N- to C-terminus: Energy-coupling factor transporter ATP-binding protein EcfA2 (293 aa).

The region spanning 3–246 is the ABC transporter domain; the sequence is ITFQKVEHRY…ADELEKIGVD (244 aa). 40 to 47 is an ATP binding site; sequence GHTGSGKS.

The protein belongs to the ABC transporter superfamily. Energy-coupling factor EcfA family. In terms of assembly, forms a stable energy-coupling factor (ECF) transporter complex composed of 2 membrane-embedded substrate-binding proteins (S component), 2 ATP-binding proteins (A component) and 2 transmembrane proteins (T component).

It localises to the cell membrane. In terms of biological role, ATP-binding (A) component of a common energy-coupling factor (ECF) ABC-transporter complex. Unlike classic ABC transporters this ECF transporter provides the energy necessary to transport a number of different substrates. The chain is Energy-coupling factor transporter ATP-binding protein EcfA2 from Bacillus cereus (strain ATCC 10987 / NRS 248).